A 223-amino-acid chain; its full sequence is Probable cytokinin riboside 5'-monophosphate phosphoribohydrolase LOGL1 (223 aa).

Substrate contacts are provided by residues E89, 107 to 108 (RK), 124 to 130 (GYGTMEE), and T136. The tract at residues 201–223 (QEVAPRTSWEMSELGYGKTPEES) is disordered.

It belongs to the LOG family. Expressed in shoot apex, immature inflorescences and flowers.

It catalyses the reaction N(6)-(dimethylallyl)adenosine 5'-phosphate + H2O = N(6)-dimethylallyladenine + D-ribose 5-phosphate. The enzyme catalyses 9-ribosyl-trans-zeatin 5'-phosphate + H2O = trans-zeatin + D-ribose 5-phosphate. Its function is as follows. Cytokinin-activating enzyme working in the direct activation pathway. Phosphoribohydrolase that converts inactive cytokinin nucleotides to the biologically active free-base forms. The chain is Probable cytokinin riboside 5'-monophosphate phosphoribohydrolase LOGL1 (LOGL1) from Oryza sativa subsp. japonica (Rice).